Here is a 246-residue protein sequence, read N- to C-terminus: Putative F-box/LRR-repeat protein 9 (246 aa).

The F-box domain maps to 18-65 (YRNWAELPPELTSSILLRLGAIEILQNAQRVCKSWRRVCQDPSMWRKI).

This chain is Putative F-box/LRR-repeat protein 9 (FBL9), found in Arabidopsis thaliana (Mouse-ear cress).